Consider the following 214-residue polypeptide: dITP/XTP pyrophosphatase (214 aa).

13-18 provides a ligand contact to substrate; it reads SHNAGK. The Mg(2+) site is built by Asp-45 and Asp-74. Asp-74 functions as the Proton acceptor in the catalytic mechanism. Substrate contacts are provided by residues Ser-75, 163–166, Lys-186, and 199–200; these read FGYD and HR.

This sequence belongs to the HAM1 NTPase family. In terms of assembly, homodimer. Mg(2+) is required as a cofactor.

It catalyses the reaction XTP + H2O = XMP + diphosphate + H(+). It carries out the reaction dITP + H2O = dIMP + diphosphate + H(+). The enzyme catalyses ITP + H2O = IMP + diphosphate + H(+). Pyrophosphatase that catalyzes the hydrolysis of nucleoside triphosphates to their monophosphate derivatives, with a high preference for the non-canonical purine nucleotides XTP (xanthosine triphosphate), dITP (deoxyinosine triphosphate) and ITP. Seems to function as a house-cleaning enzyme that removes non-canonical purine nucleotides from the nucleotide pool, thus preventing their incorporation into DNA/RNA and avoiding chromosomal lesions. This chain is dITP/XTP pyrophosphatase, found in Rhizobium meliloti (strain 1021) (Ensifer meliloti).